An 81-amino-acid polypeptide reads, in one-letter code: Putative membrane protein insertion efficiency factor (81 aa).

The segment at 61–81 (NPGGYDPVPPIPTSRSSSMAE) is disordered.

Belongs to the UPF0161 family.

It is found in the cell inner membrane. Could be involved in insertion of integral membrane proteins into the membrane. The sequence is that of Putative membrane protein insertion efficiency factor from Pseudomonas fluorescens (strain Pf0-1).